We begin with the raw amino-acid sequence, 396 residues long: Sialyltransferase-like protein 2 (396 aa).

Residues 1-6 (MKRRHL) lie on the Cytoplasmic side of the membrane. A helical; Signal-anchor for type II membrane protein membrane pass occupies residues 7–23 (PPVLVLLLLSILSLSFR). At 24 to 396 (RRLLVLQGPP…FTVPPVRLHR (373 aa)) the chain is on the lumenal side. Asn-72, Asn-260, and Asn-304 each carry an N-linked (GlcNAc...) asparagine glycan.

It belongs to the glycosyltransferase 29 family.

It localises to the golgi apparatus membrane. Its function is as follows. Does not possess sialyltransferase-like activity in vitro. The protein is Sialyltransferase-like protein 2 of Oryza sativa subsp. indica (Rice).